We begin with the raw amino-acid sequence, 743 residues long: MKIDKRLMVIVAIATLFRMIPFRLKYLVGSDPYFHLAYIEEALKAGEWFNFFTYAGGPWGLQVRLFHPLGLWATPAYIYKLFSFLGISLYTAFRVTPVIFGVLTVVFFYLSLKKLYNRDVAFIVGLFLGVNYGHIFRSMANYYRGDNYMLFWYSVALLGIALGLKTRSKYRYLFYLLPGIATGFASAFWQAYYPIFVFVLAGGLLLGVYAYLKSPKLFLDSILIVLSTGLGVLIANILGDKVGYGMLGYTDWMGKKVAETFGLEFGFIKDAYLLIHVKYLLPLSLVFLGFLIITKKLNPKIKVGVLVGGSILAFIVMLVKFPALKDLSTGFGTFREVPISETLPPTLDDLWRAYNIAIFLAALYILRLRKIRSGDAILLGYVITSLWMLRYWTRFLFTAAPAVAFLSGIGVYELTRRIKENKIRITSLGVVILLSSAFSLGEVYSVKPFMNENWEKALIFIRENSNENDIVLTWWDWGHFVTYYARRSPVAQGSPNSGVAGYYLGLVDNGWAQSLGVDYVIVSLYDILKFEAIVDTAKLSRKWENISRADYGVDFLKLTESTGSILRFDSQYSTLIVKEGNIRVILSGKVVYPREAIIESNGRIKNLKYPARSGVYVYVNLDYGYAILANEKAWETNLLRLFTQRTGENYELVYSDGGFVKVFRFVHPNVVFRGNKFILTGNGTGLGLYGYLDNGTLVFKKWYSVKNMQEFELPNNLNGSVVVRYVYTQGKIVLDRGIVRVKN.

Residues 1–7 (MKIDKRL) are Cytoplasmic-facing. Residues 8–28 (MVIVAIATLFRMIPFRLKYLV) form a helical membrane-spanning segment. Residues 29–31 (GSD) carry the DXD motif 1 motif. Residues 29–91 (GSDPYFHLAY…FSFLGISLYT (63 aa)) are Extracellular-facing. Mn(2+) is bound at residue Asp-31. Residues 92-112 (AFRVTPVIFGVLTVVFFYLSL) traverse the membrane as a helical segment. Topologically, residues 113–119 (KKLYNRD) are cytoplasmic. Residues 120–140 (VAFIVGLFLGVNYGHIFRSMA) traverse the membrane as a helical segment. Residues 141 to 144 (NYYR) are Extracellular-facing. 2 residues coordinate Mn(2+): Arg-144 and Asp-146. The DXD motif 2 motif lies at 144-146 (RGD). Residues 145–165 (GDNYMLFWYSVALLGIALGLK) form a helical membrane-spanning segment. Over 166–170 (TRSKY) the chain is Cytoplasmic. Transmembrane regions (helical) follow at residues 171–191 (RYLF…FWQA) and 192–212 (YYPI…YAYL). Residues 213-216 (KSPK) are Cytoplasmic-facing. The chain crosses the membrane as a helical span at residues 217 to 237 (LFLDSILIVLSTGLGVLIANI). Topologically, residues 238–272 (LGDKVGYGMLGYTDWMGKKVAETFGLEFGFIKDAY) are extracellular. A helical transmembrane segment spans residues 273–293 (LLIHVKYLLPLSLVFLGFLII). Topologically, residues 294-302 (TKKLNPKIK) are cytoplasmic. Residues 303–323 (VGVLVGGSILAFIVMLVKFPA) traverse the membrane as a helical segment. The Extracellular portion of the chain corresponds to 324–345 (LKDLSTGFGTFREVPISETLPP). The short motif at 333–336 (TFRE) is the TIXE motif element. A helical membrane pass occupies residues 346–366 (TLDDLWRAYNIAIFLAALYIL). The Cytoplasmic portion of the chain corresponds to 367 to 373 (RLRKIRS). The chain crosses the membrane as a helical span at residues 374–391 (GDAILLGYVITSLWMLRY). Residues 392–394 (WTR) are Extracellular-facing. Arg-394 provides a ligand contact to a glycophospholipid. The chain crosses the membrane as a helical span at residues 395 to 415 (FLFTAAPAVAFLSGIGVYELT). Topologically, residues 416-424 (RRIKENKIR) are cytoplasmic. Residues 425–445 (ITSLGVVILLSSAFSLGEVYS) traverse the membrane as a helical segment. The Extracellular portion of the chain corresponds to 446–743 (VKPFMNENWE…LDRGIVRVKN (298 aa)). The tract at residues 474-476 (WWD) is interacts with target acceptor peptide in protein substrate. The short motif at 474-478 (WWDWG) is the WWDYG motif element. The DK motif signature appears at 526-533 (DILKFEAI).

This sequence belongs to the STT3 family. It depends on Mn(2+) as a cofactor. Mg(2+) serves as cofactor.

The protein resides in the cell membrane. The enzyme catalyses an archaeal dolichyl phosphooligosaccharide + [protein]-L-asparagine = an archaeal dolichyl phosphate + a glycoprotein with the oligosaccharide chain attached by N-beta-D-glycosyl linkage to a protein L-asparagine.. It participates in protein modification; protein glycosylation. Functionally, oligosaccharyl transferase (OST) that catalyzes the initial transfer of a defined glycan (ManNAcXyl(2)GlcAMan(2)GalNAc in P.furiosus) from the lipid carrier dolichol-monophosphate to an asparagine residue within an Asn-X-Ser/Thr consensus motif in nascent polypeptide chains, the first step in protein N-glycosylation. In Pyrococcus furiosus (strain ATCC 43587 / DSM 3638 / JCM 8422 / Vc1), this protein is Dolichyl-phosphooligosaccharide-protein glycotransferase 2 (aglB2).